A 449-amino-acid chain; its full sequence is Protein trichome birefringence-like 35 (449 aa).

The chain crosses the membrane as a helical; Signal-anchor for type II membrane protein span at residues 12–29 (LPLAGLLFILVVTFMILF). The GDS motif motif lies at 185-187 (GDS). A DCXHWCLPGXXDXWN motif motif is present at residues 428–442 (DCTHWCVPGVPDVWN).

It belongs to the PC-esterase family. TBL subfamily.

Its subcellular location is the membrane. Functionally, may act as a bridging protein that binds pectin and other cell wall polysaccharides. Probably involved in maintaining esterification of pectins. May be involved in the specific O-acetylation of cell wall polymers. The protein is Protein trichome birefringence-like 35 (TBL35) of Arabidopsis thaliana (Mouse-ear cress).